A 158-amino-acid chain; its full sequence is Protein NrdI (158 aa).

Belongs to the NrdI family.

Its function is as follows. Probably involved in ribonucleotide reductase function. This chain is Protein NrdI, found in Rhodococcus jostii (strain RHA1).